The sequence spans 366 residues: MSLYIGLMSGTSMDGIDAALLELPSNQLIHGITKQYSDDVRRNLDDLIMGNHLTLASICQLNTLIGREFAEAVRQLLIEIKVHPKEIQAIGSHGQTVCHDTSGNIPYTLQLGCGHTISSLTGITVVADFRTRDLVNGGQGAPFAPLYHQQIFSKVNESVAVVNIGGIANVTFIAKNQMTRGWDIGPGNCLMDAWIYKNKGAPFDKSGVWASQGEVIHPLLEYLLQDPFFHLDSPKSIGKEYFSLSWLQKHLKPDYTPADIQATLLALTAHTIAETILNESEEIKQLYLCGGGAHNTHLKENLARLLPGITVKSIAELGISPDYLEAMMFAWLAAQTINQIPVNLTSITGAKGIAILGAVYPIIKSY.

Residue 10 to 17 (GTSMDGID) coordinates ATP.

The protein belongs to the anhydro-N-acetylmuramic acid kinase family.

It carries out the reaction 1,6-anhydro-N-acetyl-beta-muramate + ATP + H2O = N-acetyl-D-muramate 6-phosphate + ADP + H(+). It participates in amino-sugar metabolism; 1,6-anhydro-N-acetylmuramate degradation. Its pathway is cell wall biogenesis; peptidoglycan recycling. Its function is as follows. Catalyzes the specific phosphorylation of 1,6-anhydro-N-acetylmuramic acid (anhMurNAc) with the simultaneous cleavage of the 1,6-anhydro ring, generating MurNAc-6-P. Is required for the utilization of anhMurNAc either imported from the medium or derived from its own cell wall murein, and thus plays a role in cell wall recycling. The sequence is that of Anhydro-N-acetylmuramic acid kinase from Legionella pneumophila (strain Corby).